The chain runs to 30 residues: Putative UPF0377 protein YNR075C-A (30 aa).

Belongs to the UPF0377 family.

The sequence is that of Putative UPF0377 protein YNR075C-A from Saccharomyces cerevisiae (strain ATCC 204508 / S288c) (Baker's yeast).